A 305-amino-acid chain; its full sequence is Protoheme IX farnesyltransferase (305 aa).

Helical transmembrane passes span 31–51 (VMSL…YSVH), 52–72 (PFIA…AGAI), 96–118 (VIES…FFMA), 122–144 (NLLA…TIWL), 151–171 (NIVI…AAVS), 180–200 (ILFL…ALFC), 225–245 (ILIY…IGMN), 247–267 (FIYL…AGSL), and 281–301 (FAYS…TNTI).

It belongs to the UbiA prenyltransferase family. Protoheme IX farnesyltransferase subfamily.

Its subcellular location is the cell inner membrane. The catalysed reaction is heme b + (2E,6E)-farnesyl diphosphate + H2O = Fe(II)-heme o + diphosphate. The protein operates within porphyrin-containing compound metabolism; heme O biosynthesis; heme O from protoheme: step 1/1. Converts heme B (protoheme IX) to heme O by substitution of the vinyl group on carbon 2 of heme B porphyrin ring with a hydroxyethyl farnesyl side group. This chain is Protoheme IX farnesyltransferase, found in Rickettsia peacockii (strain Rustic).